A 335-amino-acid polypeptide reads, in one-letter code: Nod factor export ATP-binding protein I (335 aa).

The ABC transporter domain maps to 37-267 (IDVASVTKSY…KIGCQVIEIY (231 aa)). Position 69 to 76 (69 to 76 (GPNGAGKS)) interacts with ATP.

It belongs to the ABC transporter superfamily. Lipooligosaccharide exporter (TC 3.A.1.102) family. The complex is composed of two ATP-binding proteins (NodI) and two transmembrane proteins (NodJ).

It localises to the cell inner membrane. Functionally, part of the ABC transporter complex NodIJ involved in the export of the nodulation factors (Nod factors), the bacterial signal molecules that induce symbiosis and subsequent nodulation induction. Nod factors are LCO (lipo-chitin oligosaccharide), a modified beta-1,4-linked N-acetylglucosamine oligosaccharide. This subunit is responsible for energy coupling to the transport system. The sequence is that of Nod factor export ATP-binding protein I from Rhizobium meliloti (strain 1021) (Ensifer meliloti).